We begin with the raw amino-acid sequence, 437 residues long: Transmembrane protein with metallophosphoesterase domain (437 aa).

5 helical membrane passes run leucine 7–serine 27, alanine 41–leucine 61, isoleucine 87–valine 107, leucine 116–glycine 136, and valine 164–proline 184. A divalent metal cation contacts are provided by aspartate 211, histidine 213, aspartate 243, asparagine 274, histidine 376, and histidine 378.

This sequence belongs to the metallophosphoesterase superfamily. LOC643853 family. A divalent metal cation serves as cofactor.

The protein localises to the membrane. This is Transmembrane protein with metallophosphoesterase domain (tmppe) from Danio rerio (Zebrafish).